The chain runs to 35 residues: Toxin Ado1 (35 aa).

3 disulfides stabilise this stretch: C5-C20, C12-C25, and C19-C32.

Its subcellular location is the secreted. Functionally, binds reversibly and blocks P/Q-type voltage-gated calcium channels (Cav). The chain is Toxin Ado1 from Agriosphodrus dohrni (Japanese assassin-bug).